The sequence spans 180 residues: Bifunctional protein PyrR (180 aa).

Residues 101 to 113 carry the PRPP-binding motif; sequence VILVDDVLYTGRT.

Belongs to the purine/pyrimidine phosphoribosyltransferase family. PyrR subfamily. Homodimer and homohexamer; in equilibrium.

The catalysed reaction is UMP + diphosphate = 5-phospho-alpha-D-ribose 1-diphosphate + uracil. In terms of biological role, regulates transcriptional attenuation of the pyrimidine nucleotide (pyr) operon by binding in a uridine-dependent manner to specific sites on pyr mRNA. This disrupts an antiterminator hairpin in the RNA and favors formation of a downstream transcription terminator, leading to a reduced expression of downstream genes. Also displays a weak uracil phosphoribosyltransferase activity which is not physiologically significant. This is Bifunctional protein PyrR from Bacillus mycoides (strain KBAB4) (Bacillus weihenstephanensis).